Consider the following 204-residue polypeptide: Calexcitin-1 (204 aa).

3 EF-hand domains span residues 25–61, 75–110, and 115–150; these read FLVKKWERIFSLFFDRNASHQVDWGDFYLVVKKVRDI, SLAALWEGLCSIADADKDQLISIDEWIGLLKKTDAK, and WFKDYQNFMFKLFDVSCDGVMDLAEYTDGMSTYGFD. Ca(2+) contacts are provided by Asp39, Asn41, Ser43, Gln45, Asp50, Asp88, Asp90, Asp92, Glu99, Asp128, Ser130, Asp132, and Glu139.

This Caenorhabditis elegans protein is Calexcitin-1 (cex-1).